The following is a 355-amino-acid chain: MSGISAQLVKKLRDLTDAGMMDCKKALVEVAGDLQKAIDFLREKGLSKAAKKADRIAAEGVVALEVAPDFKSAMMVEINSETDFVAKNEGFKELVKKTLETIKTHNIHTTEELLKSPLDNKPFEEYLHSQIAVIGENILVRKIAHLKAPSSHIINGYAHSNARVGVLIAIEYNNEKNAPKVVELARNIAMHAAAMKPQVLDCKDFSLDFVKKETLALIAEIEKDNEEAKRLGKPLKNIPTFGSRIELSDEVLAHQKKAFEDELKEQGKPEKIWDKIVPGKMERFIADNTLIDQRLTLLGQFYVMDDKKTIAQVIADCSKEWDDNLKITEYVRFELGEGIEKKTENFAEEVALQMK.

The segment at 82-85 (TDFV) is involved in Mg(2+) ion dislocation from EF-Tu.

The protein belongs to the EF-Ts family.

The protein resides in the cytoplasm. Associates with the EF-Tu.GDP complex and induces the exchange of GDP to GTP. It remains bound to the aminoacyl-tRNA.EF-Tu.GTP complex up to the GTP hydrolysis stage on the ribosome. This is Elongation factor Ts (tsf) from Helicobacter pylori (strain J99 / ATCC 700824) (Campylobacter pylori J99).